A 221-amino-acid polypeptide reads, in one-letter code: 7-carboxy-7-deazaguanine synthase (221 aa).

Residues 12-14 and Arg27 each bind substrate; that span reads ING. Positions 18-216 constitute a Radical SAM core domain; it reads KSGQLSVFIR…IQIHKIIWNP (199 aa). [4Fe-4S] cluster contacts are provided by Cys31, Cys35, and Cys38. Thr40 provides a ligand contact to Mg(2+). Thr73 provides a ligand contact to substrate. Gly75 is an S-adenosyl-L-methionine binding site.

It belongs to the radical SAM superfamily. 7-carboxy-7-deazaguanine synthase family. As to quaternary structure, homodimer. [4Fe-4S] cluster serves as cofactor. S-adenosyl-L-methionine is required as a cofactor. Requires Mg(2+) as cofactor.

It catalyses the reaction 6-carboxy-5,6,7,8-tetrahydropterin + H(+) = 7-carboxy-7-deazaguanine + NH4(+). The protein operates within purine metabolism; 7-cyano-7-deazaguanine biosynthesis. Functionally, catalyzes the complex heterocyclic radical-mediated conversion of 6-carboxy-5,6,7,8-tetrahydropterin (CPH4) to 7-carboxy-7-deazaguanine (CDG), a step common to the biosynthetic pathways of all 7-deazapurine-containing compounds. This chain is 7-carboxy-7-deazaguanine synthase, found in Clostridium acetobutylicum (strain ATCC 824 / DSM 792 / JCM 1419 / IAM 19013 / LMG 5710 / NBRC 13948 / NRRL B-527 / VKM B-1787 / 2291 / W).